Here is a 300-residue protein sequence, read N- to C-terminus: Bifunctional protein FolD (300 aa).

NADP(+) is bound by residues 168–170 (GRS), serine 193, and isoleucine 234.

The protein belongs to the tetrahydrofolate dehydrogenase/cyclohydrolase family. Homodimer.

It catalyses the reaction (6R)-5,10-methylene-5,6,7,8-tetrahydrofolate + NADP(+) = (6R)-5,10-methenyltetrahydrofolate + NADPH. It carries out the reaction (6R)-5,10-methenyltetrahydrofolate + H2O = (6R)-10-formyltetrahydrofolate + H(+). The protein operates within one-carbon metabolism; tetrahydrofolate interconversion. Catalyzes the oxidation of 5,10-methylenetetrahydrofolate to 5,10-methenyltetrahydrofolate and then the hydrolysis of 5,10-methenyltetrahydrofolate to 10-formyltetrahydrofolate. In Ehrlichia canis (strain Jake), this protein is Bifunctional protein FolD.